The sequence spans 239 residues: Fatty acid metabolism regulator protein (239 aa).

One can recognise an HTH gntR-type domain in the interval 6-74 (QSPAGFAEEY…HGKPTKVNNF (69 aa)). The segment at residues 34–53 (ERELSELIGVTRTTLREVLQ) is a DNA-binding region (H-T-H motif).

In terms of assembly, homodimer.

The protein resides in the cytoplasm. In terms of biological role, multifunctional regulator of fatty acid metabolism. Represses transcription of at least eight genes required for fatty acid transport and beta-oxidation including fadA, fadB, fadD, fadL and fadE. Activates transcription of at least three genes required for unsaturated fatty acid biosynthesis: fabA, fabB and iclR, the gene encoding the transcriptional regulator of the aceBAK operon encoding the glyoxylate shunt enzymes. Binding of FadR is specifically inhibited by long chain fatty acyl-CoA compounds. In Salmonella typhi, this protein is Fatty acid metabolism regulator protein.